The following is a 287-amino-acid chain: uncharacterized protein (287 aa).

Active-site charge relay system residues include Thr43 and Tyr104. Tyr130 acts as the Proton donor in catalysis. Residue Lys158 is the Schiff-base intermediate with substrate of the active site.

The protein belongs to the DapA family. In terms of assembly, homotetramer.

It localises to the cytoplasm. This is an uncharacterized protein from Pyrococcus horikoshii (strain ATCC 700860 / DSM 12428 / JCM 9974 / NBRC 100139 / OT-3).